The sequence spans 639 residues: Phosphomethylpyrimidine synthase (639 aa).

The tract at residues 49 to 71 is disordered; that stretch reads DTPTDFGGEQNRPVRVYDTSGPY. Residues Asn-231, Met-260, Tyr-289, His-325, 345–347, 386–389, and Glu-425 each bind substrate; these read SRG and DGLR. Zn(2+) is bound at residue His-429. Tyr-452 lines the substrate pocket. Residue His-493 participates in Zn(2+) binding. The [4Fe-4S] cluster site is built by Cys-573, Cys-576, and Cys-581.

The protein belongs to the ThiC family. Homodimer. Requires [4Fe-4S] cluster as cofactor.

It carries out the reaction 5-amino-1-(5-phospho-beta-D-ribosyl)imidazole + S-adenosyl-L-methionine = 4-amino-2-methyl-5-(phosphooxymethyl)pyrimidine + CO + 5'-deoxyadenosine + formate + L-methionine + 3 H(+). The protein operates within cofactor biosynthesis; thiamine diphosphate biosynthesis. In terms of biological role, catalyzes the synthesis of the hydroxymethylpyrimidine phosphate (HMP-P) moiety of thiamine from aminoimidazole ribotide (AIR) in a radical S-adenosyl-L-methionine (SAM)-dependent reaction. The protein is Phosphomethylpyrimidine synthase of Teredinibacter turnerae (strain ATCC 39867 / T7901).